The sequence spans 120 residues: Lysozyme (120 aa).

The region spanning 1-120 (KRFTRCGLVN…NHSNPDISSC (120 aa)) is the C-type lysozyme domain. 4 disulfide bridges follow: C6-C120, C27-C110, C62-C76, and C72-C90. Catalysis depends on residues E32 and D50.

This sequence belongs to the glycosyl hydrolase 22 family. In terms of assembly, monomer.

The catalysed reaction is Hydrolysis of (1-&gt;4)-beta-linkages between N-acetylmuramic acid and N-acetyl-D-glucosamine residues in a peptidoglycan and between N-acetyl-D-glucosamine residues in chitodextrins.. Functionally, lysozymes have primarily a bacteriolytic function; those in tissues and body fluids are associated with the monocyte-macrophage system and enhance the activity of immunoagents. The polypeptide is Lysozyme (Antheraea mylitta (Tasar silkworm)).